Consider the following 268-residue polypeptide: Cytochrome c oxidase subunit 3 (268 aa).

Transmembrane regions (helical) follow at residues 19–39 (PWPI…VLTM), 49–69 (FDLG…DIVI), 85–105 (LIIG…SVFW), 124–144 (PVGI…IILL), 165–185 (SIIG…FQAF), 202–222 (VFFA…LFLF), and 245–265 (ILYW…VYFW).

This sequence belongs to the cytochrome c oxidase subunit 3 family. As to quaternary structure, component of the cytochrome c oxidase (complex IV, CIV), a multisubunit enzyme composed of a catalytic core of 3 subunits and several supernumerary subunits. The complex exists as a monomer or a dimer and forms supercomplexes (SCs) in the inner mitochondrial membrane with ubiquinol-cytochrome c oxidoreductase (cytochrome b-c1 complex, complex III, CIII).

The protein localises to the mitochondrion inner membrane. It catalyses the reaction 4 Fe(II)-[cytochrome c] + O2 + 8 H(+)(in) = 4 Fe(III)-[cytochrome c] + 2 H2O + 4 H(+)(out). In terms of biological role, component of the cytochrome c oxidase, the last enzyme in the mitochondrial electron transport chain which drives oxidative phosphorylation. The respiratory chain contains 3 multisubunit complexes succinate dehydrogenase (complex II, CII), ubiquinol-cytochrome c oxidoreductase (cytochrome b-c1 complex, complex III, CIII) and cytochrome c oxidase (complex IV, CIV), that cooperate to transfer electrons derived from NADH and succinate to molecular oxygen, creating an electrochemical gradient over the inner membrane that drives transmembrane transport and the ATP synthase. Cytochrome c oxidase is the component of the respiratory chain that catalyzes the reduction of oxygen to water. Electrons originating from reduced cytochrome c in the intermembrane space (IMS) are transferred via the dinuclear copper A center (CU(A)) of subunit 2 and heme A of subunit 1 to the active site in subunit 1, a binuclear center (BNC) formed by heme A3 and copper B (CU(B)). The BNC reduces molecular oxygen to 2 water molecules using 4 electrons from cytochrome c in the IMS and 4 protons from the mitochondrial matrix. The chain is Cytochrome c oxidase subunit 3 (COIII) from Schizophyllum commune (Split gill fungus).